The sequence spans 191 residues: MEYFDMRKMSVNLWRNAAGETREICTFPPAKRDFYWRASIASIAANGEFSLFPGMERIVTLLEGGEMFLESTDRFNHTLKPLQPFAFAADQVVKAKLTAGQMSMDFNIMTRLDVCKAKVRIAERTFTTFGSRGGVVFVINGAWQLGDKLLTTDQGACWFDGRHTLRLLQPQGKLLFSEINWLAGHSPDQVQ.

Belongs to the Ves family.

The sequence is that of Protein Ves from Escherichia coli O7:K1 (strain IAI39 / ExPEC).